The sequence spans 171 residues: MNYGVALFPSKPLQDLANSYRMRYDPHYTLIPPHVTLKEPFELEEQELPSVVKRVREIAKGVDPFPLEVYKVDTFYPVSNTLFFKIREHSALTELYEQLHTSPFKRNEKYSFVPHLTIGQNLSYDELSDNLGRLKMKQIQHEEIVDRIQLLYQLDNGSWTVYETFKLGKEE.

The active-site Proton donor is the His34. 2 short sequence motifs (HXTX) span residues His34–Leu37 and His115–Ile118. His115 functions as the Proton acceptor in the catalytic mechanism.

Belongs to the 2H phosphoesterase superfamily. YjcG family.

The protein is Putative phosphoesterase BH1439 of Halalkalibacterium halodurans (strain ATCC BAA-125 / DSM 18197 / FERM 7344 / JCM 9153 / C-125) (Bacillus halodurans).